A 952-amino-acid polypeptide reads, in one-letter code: Alpha-L-rhamnosidase (952 aa).

An N-terminal signal peptide occupies residues 1 to 21; the sequence is MKYNKLLFSLLLLAVFCFSCK. Alpha-L-rhamnose-binding positions include Asp-520, 524-525, Asp-532, and Trp-594; that span reads RE. Residue Glu-525 is the Proton donor of the active site. Glu-809 acts as the Proton acceptor in catalysis. His-826 provides a ligand contact to alpha-L-rhamnose.

This sequence belongs to the glycosyl hydrolase 78 family.

Its subcellular location is the cell membrane. It carries out the reaction Hydrolysis of terminal non-reducing alpha-L-rhamnose residues in alpha-L-rhamnosides.. Its function is as follows. Alpha-L-rhamnosidase that may be involved in ulvan degradation. Ulvan is the main polysaccharide component of the Ulvales (green seaweed) cell wall. It is composed of disaccharide building blocks comprising 3-sulfated rhamnose (Rha3S) linked to D-glucuronic acid (GlcA), L-iduronic acid (IduA), or D-xylose (Xyl). The sequence is that of Alpha-L-rhamnosidase from Formosa agariphila (strain DSM 15362 / KCTC 12365 / LMG 23005 / KMM 3901 / M-2Alg 35-1).